The primary structure comprises 303 residues: Recombination-associated protein RdgC (303 aa).

It belongs to the RdgC family.

It localises to the cytoplasm. The protein resides in the nucleoid. In terms of biological role, may be involved in recombination. The protein is Recombination-associated protein RdgC of Edwardsiella ictaluri (strain 93-146).